A 299-amino-acid polypeptide reads, in one-letter code: ATP phosphoribosyltransferase (299 aa).

Belongs to the ATP phosphoribosyltransferase family. Long subfamily. The cofactor is Mg(2+).

The protein resides in the cytoplasm. The catalysed reaction is 1-(5-phospho-beta-D-ribosyl)-ATP + diphosphate = 5-phospho-alpha-D-ribose 1-diphosphate + ATP. The protein operates within amino-acid biosynthesis; L-histidine biosynthesis; L-histidine from 5-phospho-alpha-D-ribose 1-diphosphate: step 1/9. Its activity is regulated as follows. Feedback inhibited by histidine. Functionally, catalyzes the condensation of ATP and 5-phosphoribose 1-diphosphate to form N'-(5'-phosphoribosyl)-ATP (PR-ATP). Has a crucial role in the pathway because the rate of histidine biosynthesis seems to be controlled primarily by regulation of HisG enzymatic activity. This Shewanella halifaxensis (strain HAW-EB4) protein is ATP phosphoribosyltransferase.